The following is a 288-amino-acid chain: 4-hydroxy-tetrahydrodipicolinate synthase (288 aa).

A pyruvate-binding site is contributed by Thr42. Residue Tyr129 is the Proton donor/acceptor of the active site. Lys157 serves as the catalytic Schiff-base intermediate with substrate. Ile198 serves as a coordination point for pyruvate.

It belongs to the DapA family. Homotetramer; dimer of dimers.

It localises to the cytoplasm. The catalysed reaction is L-aspartate 4-semialdehyde + pyruvate = (2S,4S)-4-hydroxy-2,3,4,5-tetrahydrodipicolinate + H2O + H(+). It functions in the pathway amino-acid biosynthesis; L-lysine biosynthesis via DAP pathway; (S)-tetrahydrodipicolinate from L-aspartate: step 3/4. Catalyzes the condensation of (S)-aspartate-beta-semialdehyde [(S)-ASA] and pyruvate to 4-hydroxy-tetrahydrodipicolinate (HTPA). The chain is 4-hydroxy-tetrahydrodipicolinate synthase from Chlamydia abortus (strain DSM 27085 / S26/3) (Chlamydophila abortus).